The primary structure comprises 219 residues: 2-C-methyl-D-erythritol 4-phosphate cytidylyltransferase (219 aa).

The protein belongs to the IspD/TarI cytidylyltransferase family. IspD subfamily.

The catalysed reaction is 2-C-methyl-D-erythritol 4-phosphate + CTP + H(+) = 4-CDP-2-C-methyl-D-erythritol + diphosphate. It participates in isoprenoid biosynthesis; isopentenyl diphosphate biosynthesis via DXP pathway; isopentenyl diphosphate from 1-deoxy-D-xylulose 5-phosphate: step 2/6. Catalyzes the formation of 4-diphosphocytidyl-2-C-methyl-D-erythritol from CTP and 2-C-methyl-D-erythritol 4-phosphate (MEP). The chain is 2-C-methyl-D-erythritol 4-phosphate cytidylyltransferase from Chlamydia trachomatis serovar L2 (strain ATCC VR-902B / DSM 19102 / 434/Bu).